Reading from the N-terminus, the 213-residue chain is Adenylate kinase (213 aa).

10 to 15 lines the ATP pocket; sequence GSGKGS. Positions 30 to 60 are NMP; it reads STGNLFRAILKEDSELARKIKEINVSGGKLV. AMP contacts are provided by residues Thr31, Arg36, 58-60, 87-90, and Gln94; these read KLV and GYPR. The interval 123–160 is LID; sequence GRWMCPKCAGIYNIHFKKPQVDGVCDNDQATLYQRADD. Arg124 lines the ATP pocket. Residues Cys127 and Cys130 each contribute to the Zn(2+) site. 133–134 is an ATP binding site; the sequence is IY. Zn(2+) is bound by residues Cys147 and Asp150. 2 residues coordinate AMP: Arg157 and Arg168. Gln196 is an ATP binding site.

Belongs to the adenylate kinase family. As to quaternary structure, monomer.

It is found in the cytoplasm. The enzyme catalyses AMP + ATP = 2 ADP. It functions in the pathway purine metabolism; AMP biosynthesis via salvage pathway; AMP from ADP: step 1/1. Its function is as follows. Catalyzes the reversible transfer of the terminal phosphate group between ATP and AMP. Plays an important role in cellular energy homeostasis and in adenine nucleotide metabolism. The chain is Adenylate kinase from Ureaplasma urealyticum serovar 10 (strain ATCC 33699 / Western).